We begin with the raw amino-acid sequence, 450 residues long: Phosphoglucosamine mutase (450 aa).

The active-site Phosphoserine intermediate is the serine 103. Serine 103, aspartate 243, aspartate 245, and aspartate 247 together coordinate Mg(2+). Position 103 is a phosphoserine (serine 103).

Belongs to the phosphohexose mutase family. The cofactor is Mg(2+). Activated by phosphorylation.

The catalysed reaction is alpha-D-glucosamine 1-phosphate = D-glucosamine 6-phosphate. Functionally, catalyzes the conversion of glucosamine-6-phosphate to glucosamine-1-phosphate. The protein is Phosphoglucosamine mutase of Lactobacillus delbrueckii subsp. bulgaricus (strain ATCC BAA-365 / Lb-18).